Here is a 261-residue protein sequence, read N- to C-terminus: Phosphate import ATP-binding protein PstB 1 (261 aa).

An ABC transporter domain is found at 8-256; it reads IKVNNLSFYY…PHDSRTREYV (249 aa). 40-47 lines the ATP pocket; it reads GPSGCGKS.

It belongs to the ABC transporter superfamily. Phosphate importer (TC 3.A.1.7) family. The complex is composed of two ATP-binding proteins (PstB), two transmembrane proteins (PstC and PstA) and a solute-binding protein (PstS).

Its subcellular location is the cell inner membrane. It carries out the reaction phosphate(out) + ATP + H2O = ADP + 2 phosphate(in) + H(+). In terms of biological role, part of the ABC transporter complex PstSACB involved in phosphate import. Responsible for energy coupling to the transport system. This Nostoc sp. (strain PCC 7120 / SAG 25.82 / UTEX 2576) protein is Phosphate import ATP-binding protein PstB 1.